Reading from the N-terminus, the 55-residue chain is UPF0391 membrane protein RALTA_A0099 (55 aa).

The next 2 helical transmembrane spans lie at 5-25 and 30-50; these read ALVF…GIAA and IAKI…VMGL.

It belongs to the UPF0391 family.

It localises to the cell membrane. In Cupriavidus taiwanensis (strain DSM 17343 / BCRC 17206 / CCUG 44338 / CIP 107171 / LMG 19424 / R1) (Ralstonia taiwanensis (strain LMG 19424)), this protein is UPF0391 membrane protein RALTA_A0099.